The sequence spans 459 residues: ATP synthase subunit beta (459 aa).

Residue 147–154 (GGAGVGKT) coordinates ATP.

The protein belongs to the ATPase alpha/beta chains family. In terms of assembly, F-type ATPases have 2 components, CF(1) - the catalytic core - and CF(0) - the membrane proton channel. CF(1) has five subunits: alpha(3), beta(3), gamma(1), delta(1), epsilon(1). CF(0) has three main subunits: a(1), b(2) and c(9-12). The alpha and beta chains form an alternating ring which encloses part of the gamma chain. CF(1) is attached to CF(0) by a central stalk formed by the gamma and epsilon chains, while a peripheral stalk is formed by the delta and b chains.

It localises to the cell inner membrane. The enzyme catalyses ATP + H2O + 4 H(+)(in) = ADP + phosphate + 5 H(+)(out). Functionally, produces ATP from ADP in the presence of a proton gradient across the membrane. The catalytic sites are hosted primarily by the beta subunits. The chain is ATP synthase subunit beta from Hydrogenovibrio crunogenus (strain DSM 25203 / XCL-2) (Thiomicrospira crunogena).